Here is a 1229-residue protein sequence, read N- to C-terminus: DNA-directed RNA polymerase subunit beta (1229 aa).

The interval 1175–1229 (ESIDEDEQPQGLGAFERGLEEVENGEEDDDKEKFYEDLMDASQEQDESADDDIDE) is disordered. Acidic residues-rich tracts occupy residues 1195-1204 (EVENGEEDDD) and 1211-1229 (DLMD…DIDE).

The protein belongs to the RNA polymerase beta chain family. In terms of assembly, the RNAP catalytic core consists of 2 alpha, 1 beta, 1 beta' and 1 omega subunit. When a sigma factor is associated with the core the holoenzyme is formed, which can initiate transcription.

The catalysed reaction is RNA(n) + a ribonucleoside 5'-triphosphate = RNA(n+1) + diphosphate. Functionally, DNA-dependent RNA polymerase catalyzes the transcription of DNA into RNA using the four ribonucleoside triphosphates as substrates. This chain is DNA-directed RNA polymerase subunit beta, found in Caldicellulosiruptor saccharolyticus (strain ATCC 43494 / DSM 8903 / Tp8T 6331).